Consider the following 396-residue polypeptide: L-lactate dehydrogenase (396 aa).

Residues methionine 1 to glycine 380 form the FMN hydroxy acid dehydrogenase domain. Tyrosine 24 serves as a coordination point for substrate. FMN contacts are provided by serine 106 and glutamine 127. Tyrosine 129 is a substrate binding site. Residue threonine 155 coordinates FMN. Arginine 164 is a substrate binding site. Lysine 251 is a binding site for FMN. Histidine 275 functions as the Proton acceptor in the catalytic mechanism. Arginine 278 is a binding site for substrate. An FMN-binding site is contributed by aspartate 306–arginine 330.

It belongs to the FMN-dependent alpha-hydroxy acid dehydrogenase family. The cofactor is FMN.

It is found in the cell inner membrane. It carries out the reaction (S)-lactate + A = pyruvate + AH2. In terms of biological role, catalyzes the conversion of L-lactate to pyruvate. Is coupled to the respiratory chain. This Salmonella paratyphi A (strain ATCC 9150 / SARB42) protein is L-lactate dehydrogenase.